We begin with the raw amino-acid sequence, 234 residues long: Small ribosomal subunit protein uS2c (234 aa).

It belongs to the universal ribosomal protein uS2 family.

The protein resides in the plastid. Its subcellular location is the chloroplast. The protein is Small ribosomal subunit protein uS2c (rps2) of Pinus koraiensis (Korean pine).